Reading from the N-terminus, the 202-residue chain is MFDLTGKHVCYVADCGGIALETSKVLMTKNIAKLAILQSLENPQAIAQLQSIKPSTQIFFWTYDVTMAREEMKKYFDEVMVQMDYIDVLINGATLCDENNIDATINTNLTGMMNTVATVLPHMDRKMGGSGGLIVNVTSVIGLDPSPVFCAYSASKFGVIGFTRSLADPLYYSQNGVAVMAVCCGPTRVFVDRELKAFLEYG.

11-34 (YVADCGGIALETSKVLMTKNIAKL) contacts NAD(+). Ser139 lines the substrate pocket. The Proton acceptor role is filled by Tyr152.

Belongs to the short-chain dehydrogenases/reductases (SDR) family.

This Drosophila erecta (Fruit fly) protein is Alcohol dehydrogenase-related 31 kDa protein (Adhr).